The chain runs to 292 residues: Transcription factor-like protein DPA (292 aa).

The interval 1–25 is disordered; it reads MSMEMELFVTPEKQRQHPSVSVEKT. Residues 51–135 mediate DNA binding; sequence GGGLRQFSVM…KKEIRWKGLP (85 aa). The DEF box signature appears at 101-135; that stretch reads NEKNIRRRVYDALNVFMALDIIARDKKEIRWKGLP. The stretch at 163 to 184 forms a coiled coil; the sequence is LKELREKVSSLESLMSRNQEMV. A disordered region spans residues 246–280; that stretch reads QEQNRVSSSSSTHHQSQHSSAHSSSSSCIASGTSG. Positions 252 to 280 are enriched in low complexity; that stretch reads SSSSSTHHQSQHSSAHSSSSSCIASGTSG.

The protein belongs to the E2F/DP family. As to quaternary structure, heterodimer with E2F. Interacts preferentially with E2FA and E2FB, but also with E2FC. In terms of tissue distribution, strongly expressed in the actively dividing tissues of the shoot apical meristem, young leaf primordia, the vascular tissues of the maturing leaf primordia and axillary buds.

The protein resides in the cytoplasm. It localises to the nucleus. Its function is as follows. Involved in the regulation of the G1/S transition. Increases the DNA binding and the transactivation activities of E2F proteins after heterodimerization. The complex DPA/E2FA promotes cell division and acts as a regulator of the endocycle. Positively regulates the activity of S phase-specific genes. The chain is Transcription factor-like protein DPA (DPA) from Arabidopsis thaliana (Mouse-ear cress).